The primary structure comprises 203 residues: High-molecular weight cobalt-containing nitrile hydratase subunit alpha (203 aa).

Co(3+)-binding residues include C102, C105, S106, and C107.

Belongs to the nitrile hydratase subunit alpha family. Heterodimer of an alpha and a beta chain. Co(3+) serves as cofactor.

The enzyme catalyses an aliphatic primary amide = an aliphatic nitrile + H2O. Functionally, NHase catalyzes the hydration of various nitrile compounds to the corresponding amides. This chain is High-molecular weight cobalt-containing nitrile hydratase subunit alpha (nhhA), found in Rhodococcus rhodochrous.